The following is an 861-amino-acid chain: Valine--tRNA ligase (861 aa).

A 'HIGH' region motif is present at residues 42-52 (PNITGRIHMGH). The 'KMSKS' region motif lies at 521–525 (KMSKS). Lys-524 contacts ATP. Positions 792-861 (VAGLNLQSEI…ILNQILGDLM (70 aa)) form a coiled coil.

This sequence belongs to the class-I aminoacyl-tRNA synthetase family. ValS type 1 subfamily. In terms of assembly, monomer.

Its subcellular location is the cytoplasm. It catalyses the reaction tRNA(Val) + L-valine + ATP = L-valyl-tRNA(Val) + AMP + diphosphate. Its function is as follows. Catalyzes the attachment of valine to tRNA(Val). As ValRS can inadvertently accommodate and process structurally similar amino acids such as threonine, to avoid such errors, it has a 'posttransfer' editing activity that hydrolyzes mischarged Thr-tRNA(Val) in a tRNA-dependent manner. The protein is Valine--tRNA ligase of Pseudothermotoga lettingae (strain ATCC BAA-301 / DSM 14385 / NBRC 107922 / TMO) (Thermotoga lettingae).